Here is a 568-residue protein sequence, read N- to C-terminus: Dual specificity tyrosine-phosphorylation-regulated kinase 3 (568 aa).

The interval 1–168 (MKWKEKLGDG…HGVIGGPNNG (168 aa)) is disordered. A compositionally biased stretch (polar residues) spans 77-114 (SNTVQSDGISDSEKCSPTVSQGKSSDCLNTVKSNSSSK). The Protein kinase domain maps to 189–502 (YEVLKIIGKG…PAQALRHPWI (314 aa)). ATP-binding positions include 195–203 (IGKGSFGQV) and K218. The active-site Proton acceptor is the D315. The residue at position 330 (S330) is a Phosphoserine. Y349 is modified (phosphotyrosine). The short motif at 448–461 (RSRRGKKRGPPGSK) is the Nuclear localization signal element.

This sequence belongs to the protein kinase superfamily. CMGC Ser/Thr protein kinase family. MNB/DYRK subfamily. In terms of assembly, interacts with SIRT1. Mg(2+) is required as a cofactor. Post-translationally, protein kinase activity is activated following autophosphorylation at Tyr-349. Autophosphorylation at Ser-330 stabilizes the protein and enhances the protein kinase activity. Ubiquitinated at anaphase by the anaphase-promoting complex (APC/C), leading to its degradation by the proteasome.

The protein resides in the nucleus. It localises to the cytoplasm. The protein localises to the nucleus speckle. It is found in the cytoplasmic granule. Its subcellular location is the cytoskeleton. The protein resides in the microtubule organizing center. It localises to the centrosome. The catalysed reaction is L-seryl-[protein] + ATP = O-phospho-L-seryl-[protein] + ADP + H(+). It carries out the reaction L-threonyl-[protein] + ATP = O-phospho-L-threonyl-[protein] + ADP + H(+). The enzyme catalyses L-tyrosyl-[protein] + ATP = O-phospho-L-tyrosyl-[protein] + ADP + H(+). With respect to regulation, protein kinase activity is activated following autophosphorylation at Tyr-349. Its function is as follows. Dual-specificity protein kinase that promotes disassembly of several types of membraneless organelles during mitosis, such as stress granules, nuclear speckles and pericentriolar material. Dual-specificity tyrosine-regulated kinases (DYRKs) autophosphorylate a critical tyrosine residue in their activation loop and phosphorylate their substrate on serine and threonine residues. Acts as a central dissolvase of membraneless organelles during the G2-to-M transition, after the nuclear-envelope breakdown: acts by mediating phosphorylation of multiple serine and threonine residues in unstructured domains of proteins, such as SRRM1 and PCM1. Does not mediate disassembly of all membraneless organelles: disassembly of P-body and nucleolus is not regulated by DYRK3. Dissolution of membraneless organelles at the onset of mitosis is also required to release mitotic regulators, such as ZNF207, from liquid-unmixed organelles where they are sequestered and keep them dissolved during mitosis. Regulates mTORC1 by mediating the dissolution of stress granules: during stressful conditions, DYRK3 partitions from the cytosol to the stress granule, together with mTORC1 components, which prevents mTORC1 signaling. When stress signals are gone, the kinase activity of DYRK3 is required for the dissolution of stress granule and mTORC1 relocation to the cytosol: acts by mediating the phosphorylation of the mTORC1 inhibitor AKT1S1, allowing full reactivation of mTORC1 signaling. Also acts as a negative regulator of EPO-dependent erythropoiesis: may place an upper limit on red cell production during stress erythropoiesis. Inhibits cell death due to cytokine withdrawal in hematopoietic progenitor cells. Promotes cell survival upon genotoxic stress through phosphorylation of SIRT1: this in turn inhibits p53/TP53 activity and apoptosis. This Macaca fascicularis (Crab-eating macaque) protein is Dual specificity tyrosine-phosphorylation-regulated kinase 3.